A 346-amino-acid polypeptide reads, in one-letter code: Probable choline kinase 3 (346 aa).

ATP is bound by residues Arg71, Gln207, and Asp224.

It belongs to the choline/ethanolamine kinase family.

The enzyme catalyses choline + ATP = phosphocholine + ADP + H(+). It functions in the pathway phospholipid metabolism; phosphatidylcholine biosynthesis; phosphocholine from choline: step 1/1. In terms of biological role, involved in phospholipid biosynthesis. Catalyzes the first step in phosphatidylcholine biosynthesis. The chain is Probable choline kinase 3 from Arabidopsis thaliana (Mouse-ear cress).